We begin with the raw amino-acid sequence, 285 residues long: Retron Ec67 DNA adenine methylase (285 aa).

S-adenosyl-L-methionine is bound by residues Trp7, Lys11, Asp51, and Asp179.

Belongs to the N(4)/N(6)-methyltransferase family.

The catalysed reaction is a 2'-deoxyadenosine in DNA + S-adenosyl-L-methionine = an N(6)-methyl-2'-deoxyadenosine in DNA + S-adenosyl-L-homocysteine + H(+). An alpha subtype methylase that recognizes the double-stranded sequence 5'-GATC-3' and methylates A-2 on both strands. May play a regulatory role in the functions of the retron. The sequence is that of Retron Ec67 DNA adenine methylase from Escherichia coli.